Reading from the N-terminus, the 925-residue chain is Colossin-D (925 aa).

A signal peptide spans 1–26 (MIKVFKDLKFLILITIILLNLKSINC). N-linked (GlcNAc...) asparagine glycosylation is found at asparagine 47, asparagine 95, asparagine 142, asparagine 166, asparagine 283, asparagine 334, asparagine 344, asparagine 378, asparagine 401, asparagine 511, and asparagine 642.

Belongs to the serine-aspartate repeat-containing protein (SDr) family.

It is found in the secreted. This is Colossin-D (colD) from Dictyostelium discoideum (Social amoeba).